The following is a 159-amino-acid chain: 2-C-methyl-D-erythritol 2,4-cyclodiphosphate synthase (159 aa).

Residues aspartate 8 and histidine 10 each coordinate a divalent metal cation. 4-CDP-2-C-methyl-D-erythritol 2-phosphate is bound by residues 8 to 10 and 34 to 35; these read DVH and HS. Histidine 42 provides a ligand contact to a divalent metal cation. 4-CDP-2-C-methyl-D-erythritol 2-phosphate is bound by residues 56-58, 61-65, 100-106, 132-135, phenylalanine 139, and arginine 142; these read DIG, FPDTD, AQAPKML, and TTTE.

The protein belongs to the IspF family. As to quaternary structure, homotrimer. The cofactor is a divalent metal cation.

It catalyses the reaction 4-CDP-2-C-methyl-D-erythritol 2-phosphate = 2-C-methyl-D-erythritol 2,4-cyclic diphosphate + CMP. Its pathway is isoprenoid biosynthesis; isopentenyl diphosphate biosynthesis via DXP pathway; isopentenyl diphosphate from 1-deoxy-D-xylulose 5-phosphate: step 4/6. Its function is as follows. Involved in the biosynthesis of isopentenyl diphosphate (IPP) and dimethylallyl diphosphate (DMAPP), two major building blocks of isoprenoid compounds. Catalyzes the conversion of 4-diphosphocytidyl-2-C-methyl-D-erythritol 2-phosphate (CDP-ME2P) to 2-C-methyl-D-erythritol 2,4-cyclodiphosphate (ME-CPP) with a corresponding release of cytidine 5-monophosphate (CMP). This chain is 2-C-methyl-D-erythritol 2,4-cyclodiphosphate synthase, found in Escherichia coli O127:H6 (strain E2348/69 / EPEC).